Reading from the N-terminus, the 265-residue chain is UPF0026 protein slr1464 (265 aa).

The region spanning 16-252 (RYGRSLGIDP…QNLAKKISGA (237 aa)) is the Radical SAM core domain. Positions 32, 36, and 39 each coordinate [4Fe-4S] cluster. The tract at residues 204 to 230 (RPTRPKPLQRELEGRGNHTGTPYGDRP) is disordered.

It belongs to the UPF0026 family. [4Fe-4S] cluster serves as cofactor.

This is UPF0026 protein slr1464 from Synechocystis sp. (strain ATCC 27184 / PCC 6803 / Kazusa).